The primary structure comprises 534 residues: GPI transamidase component GPI17 (534 aa).

The Cytoplasmic portion of the chain corresponds to 1–8; that stretch reads MSNANLRK. The chain crosses the membrane as a helical span at residues 9–29; sequence WVGFCFVAIYLFLGVPLWYKL. The Lumenal segment spans residues 30-472; it reads TTVYRASLPI…VQQNFFPQEH (443 aa). Residues N100, N170, N228, N247, and N299 are each glycosylated (N-linked (GlcNAc...) asparagine). Residues 473–493 traverse the membrane as a helical segment; it reads MIAVYLPLLGPISAVMFFGFY. The Cytoplasmic portion of the chain corresponds to 494-534; sequence NVMKEKNQKSKKNGTEREVAKEKLELKEAQKLHAIDGEDEL.

Belongs to the PIGS family. As to quaternary structure, forms a complex with CDC91, GPI16, GPI8 and GAA1. Post-translationally, N-glycosylated.

It is found in the endoplasmic reticulum membrane. It participates in glycolipid biosynthesis; glycosylphosphatidylinositol-anchor biosynthesis. Its function is as follows. Component of the GPI transamidase complex. Involved in transfer of GPI to proteins. The polypeptide is GPI transamidase component GPI17 (GPI17) (Saccharomyces cerevisiae (strain ATCC 204508 / S288c) (Baker's yeast)).